The sequence spans 216 residues: Pyrophosphatase PpaX (216 aa).

Aspartate 12 functions as the Nucleophile in the catalytic mechanism.

The protein belongs to the HAD-like hydrolase superfamily. PpaX family. The cofactor is Mg(2+).

It catalyses the reaction diphosphate + H2O = 2 phosphate + H(+). Its function is as follows. Hydrolyzes pyrophosphate formed during P-Ser-HPr dephosphorylation by HPrK/P. Might play a role in controlling the intracellular pyrophosphate pool. This chain is Pyrophosphatase PpaX, found in Bacillus velezensis (strain DSM 23117 / BGSC 10A6 / LMG 26770 / FZB42) (Bacillus amyloliquefaciens subsp. plantarum).